The chain runs to 156 residues: Small ribosomal subunit protein uS7 (156 aa).

This sequence belongs to the universal ribosomal protein uS7 family. Part of the 30S ribosomal subunit. Contacts proteins S9 and S11.

In terms of biological role, one of the primary rRNA binding proteins, it binds directly to 16S rRNA where it nucleates assembly of the head domain of the 30S subunit. Is located at the subunit interface close to the decoding center, probably blocks exit of the E-site tRNA. The protein is Small ribosomal subunit protein uS7 of Methylobacterium radiotolerans (strain ATCC 27329 / DSM 1819 / JCM 2831 / NBRC 15690 / NCIMB 10815 / 0-1).